The primary structure comprises 458 residues: MIKQSEEEKDLLDVEFFVLGQAVNYLEHAHVVVRRLSEHHFKSENHKNIFLLIRDILRDRDTISISLIWEEIKRRNLDKSMDVSYLIHMSQNADIPIDLDHHIDFLHEKHVNNLLKEFLDSSFQDFTRYPNRRSPYTLIDQFKERLDDIYEKTSYPRRKHIGKTVYDIFSSGENGKASVIAQIRHRYDYRSRHKIDYVDGLPTGYSSIDEHSIILSRGNFVVIAARPAMGKTAFAIDIALNLVLEQGKAVGFISLEMSPNQIVERIISNLSETSCEQLKRGNFSRDVLSKIESIGTKLKGTHFFICDNKSTDLNTLIDQARELRENQGIDALFIDYLQLIGSSKKAENRQNEIAEISRQLRKLAVELQIPVVCLSQLSRKVEDRGDKRPMLSDLRDSGQIEQDADVILFLHRKDYYSQEATKGLSEIIVGKNRHGSVFSTTLRFNSCTGKFTIQKEAW.

Positions 194–458 constitute an SF4 helicase domain; sequence KIDYVDGLPT…GKFTIQKEAW (265 aa). 225–232 is an ATP binding site; sequence ARPAMGKT.

The protein belongs to the helicase family. DnaB subfamily. In terms of assembly, homohexamer.

It carries out the reaction Couples ATP hydrolysis with the unwinding of duplex DNA at the replication fork by translocating in the 5'-3' direction. This creates two antiparallel DNA single strands (ssDNA). The leading ssDNA polymer is the template for DNA polymerase III holoenzyme which synthesizes a continuous strand.. The enzyme catalyses ATP + H2O = ADP + phosphate + H(+). A replicative DNA helicase, it participates in initiation and elongation during DNA replication. Travels ahead of the DNA replisome, separating dsDNA into templates for DNA synthesis. A processive ATP-dependent 5'-3' DNA helicase it has DNA-dependent ATPase activity. In Chlamydia psittaci (Chlamydophila psittaci), this protein is Probable plasmid replicative DNA helicase.